We begin with the raw amino-acid sequence, 328 residues long: DNA-directed RNA polymerase subunit alpha (328 aa).

The interval 1 to 231 (MIYQMQMPEK…EHVSLFANFS (231 aa)) is alpha N-terminal domain (alpha-NTD). Residues 252–328 (MRKMLLTRIE…MDITKYQMKG (77 aa)) are alpha C-terminal domain (alpha-CTD).

It belongs to the RNA polymerase alpha chain family. Homodimer. The RNAP catalytic core consists of 2 alpha, 1 beta, 1 beta' and 1 omega subunit. When a sigma factor is associated with the core the holoenzyme is formed, which can initiate transcription.

The catalysed reaction is RNA(n) + a ribonucleoside 5'-triphosphate = RNA(n+1) + diphosphate. In terms of biological role, DNA-dependent RNA polymerase catalyzes the transcription of DNA into RNA using the four ribonucleoside triphosphates as substrates. This chain is DNA-directed RNA polymerase subunit alpha, found in Chlorobium phaeobacteroides (strain BS1).